A 473-amino-acid chain; its full sequence is H(+)/Cl(-) exchange transporter ClcA (473 aa).

The Cytoplasmic portion of the chain corresponds to 1–32 (MKTDTPSLETPQAARLRRRQLIRQLLERDKTP). The helical transmembrane segment at 33 to 69 (LAILFMAAVVGTLVGLAAVAFDKGVAWLQNQRMGALV) threads the bilayer. Residues 70–76 (HTADNYP) lie on the Periplasmic side of the membrane. A helical membrane pass occupies residues 77-100 (LLLTVAFLCSAVLAMFGYFLVRKY). The short motif at 106–110 (GSGIP) is the Selectivity filter part_1 element. Ser-107 lines the chloride pocket. The segment at residues 109–116 (IPEIEGAL) is an intramembrane region (helical). Over 117-123 (EDQRPVR) the chain is Cytoplasmic. 2 helical membrane passes run 124–141 (WWRVLPVKFFGGLGTLGG) and 148–166 (EGPTVQIGGNIGRMVLDVF). Positions 146-150 (GREGP) match the Selectivity filter part_2 motif. Residues 167-176 (RLKGDEARHT) are Cytoplasmic-facing. Intramembrane regions (helical) lie at residues 177-189 (LLATGAAAGLAAA) and 193-201 (PLAGILFII). At 202–214 (EEMRPQFRYTLIS) the chain is on the cytoplasmic side. The helical transmembrane segment at 215–232 (IKAVFIGVIMSTIMYRIF) threads the bilayer. Residues 233–252 (NHEVALIDVGKLSDAPLNTL) are Periplasmic-facing. Residues 253–281 (WLYLILGIIFGIFGPIFNKWVLGMQDLLH) traverse the membrane as a helical segment. The Cytoplasmic portion of the chain corresponds to 282–287 (RVHGGN). The chain crosses the membrane as a helical span at residues 288–309 (ITKWVLMGGAIGGLCGLLGFVA). The Periplasmic portion of the chain corresponds to 310–329 (PATSGGGFNLIPIATAGNFS). 2 helical membrane-spanning segments follow: residues 330–349 (MGMLVFIFVARVITTLLCFS) and 355–376 (GIFAPMLALGTVLGTAFGMVAV). Residues 355–359 (GIFAP) carry the Selectivity filter part_3 motif. Chloride-binding residues include Ile-356 and Phe-357. Topologically, residues 377-386 (ELFPQYHLEA) are periplasmic. The segment at residues 387 to 401 (GTFAIAGMGALLAAS) is an intramembrane region (helical). Positions 402–404 (IRA) form an intramembrane region, note=Loop between two helices. The segment at residues 405 to 416 (PLTGIILVLEMT) is an intramembrane region (helical). Residues 417–421 (DNYQL) constitute an intramembrane region (note=Loop between two helices). The chain crosses the membrane as a helical span at residues 422–438 (ILPMIITGLGATLLAQF). The Cytoplasmic portion of the chain corresponds to 439–473 (TGGKPLYSAILARTLAKQEAEQLARSKAASARENT). Tyr-445 is a binding site for chloride.

The protein belongs to the chloride channel (TC 2.A.49) family. ClcA subfamily. In terms of assembly, homodimer.

The protein resides in the cell inner membrane. It catalyses the reaction 2 chloride(in) + H(+)(out) = 2 chloride(out) + H(+)(in). Its function is as follows. Proton-coupled chloride transporter. Functions as antiport system and exchanges two chloride ions for 1 proton. Probably acts as an electrical shunt for an outwardly-directed proton pump that is linked to amino acid decarboxylation, as part of the extreme acid resistance (XAR) response. In Escherichia coli O45:K1 (strain S88 / ExPEC), this protein is H(+)/Cl(-) exchange transporter ClcA.